A 506-amino-acid chain; its full sequence is MEQKPSKVECGSDPEENSARSPDGKRKRKNGQCSLKTSMSGYIPSYLDKDEQCVVCGDKATGYHYRCITCEGCKGFFRRTIQKNLHPTYSCKYDSCCVIDKITRNQCQLCRFKKCIAVGMAMDLVLDDSKRVAKRKLIEQNRERRRKEEMIRSLQQRPEPTPEEWDLIHVATEAHRSTNAQGSHWKQRRKFLPDDIGQSPIVSMPDGDKVDLEAFSEFTKIITPAITRVVDFAKKLPMFSELPCEDQIILLKGCCMEIMSLRAAVRYDPESDTLTLSGEMAVKREQLKNGGLGVVSDAIFELGKSLSAFNLDDTEVALLQAVLLMSTDRSGLLCVDKIEKSQEAYLLAFEHYVNHRKHNIPHFWPKLLMKEREVQSSILYKGAAAEGRPGGSLGVHPEGQQLLGMHVVQGPQVRQLEQQLGEAGSLRGPVLQHQSPKSPQQRLLELLHRSGILHARAVCGEDDSSEAGSLTSSDEDPEVCEDAAQATQPLPEAPPRADGEGGGGGS.

A disordered region spans residues 1–32; the sequence is MEQKPSKVECGSDPEENSARSPDGKRKRKNGQ. The modulating stretch occupies residues 1–52; that stretch reads MEQKPSKVECGSDPEENSARSPDGKRKRKNGQCSLKTSMSGYIPSYLDKDEQ. Residues C53, C56, C70, C73, C91, C97, C107, and C110 each coordinate Zn(2+). 2 consecutive NR C4-type zinc fingers follow at residues 53–73 and 91–115; these read CVVCGDKATGYHYRCITCEGC and CKYDSCCVIDKITRNQCQLCRFKKC. A DNA-binding region (nuclear receptor) is located at residues 53–127; sequence CVVCGDKATG…VGMAMDLVLD (75 aa). An NR LBD domain is found at 163 to 407; the sequence is EEWDLIHVAT…EGQQLLGMHV (245 aa). 3,3',5-triiodo-L-thyronine contacts are provided by R228 and S277. The disordered stretch occupies residues 460–506; sequence GEDDSSEAGSLTSSDEDPEVCEDAAQATQPLPEAPPRADGEGGGGGS.

It belongs to the nuclear hormone receptor family. NR1 subfamily. In terms of assembly, binds DNA as a dimer; homodimer and heterodimer with RXRB. Interacts with NCOA3 and NCOA6 coactivators, leading to a strong increase of transcription of target genes. Probably interacts with SFPQ. Interacts with C1D. Interacts with AKAP13. Interacts with TP53INP2. Interacts with PER2. Interacts with PER2. Isoform alpha-2 and isoform alpha-1 interact with TACC1, but the interaction with alpha-1 is weaker. The interaction with isoform alpha-1, but not alpha-2, is decreased in the presence of thyroid hormone T3.

The protein resides in the nucleus. Its subcellular location is the cytoplasm. Functionally, nuclear hormone receptor that can act as a repressor or activator of transcription. High affinity receptor for thyroid hormones, including triiodothyronine and thyroxine. The chain is Thyroid hormone receptor alpha (THRA) from Sus scrofa (Pig).